Reading from the N-terminus, the 362-residue chain is Putative F-box/kelch-repeat protein At3g20710 (362 aa).

In terms of domain architecture, F-box spans 1–50; the sequence is MMMSNLPKDLVEEILSRVPFKYLRAIRSTCKNWYDLSKNRSFANKNIDKA. Kelch repeat units follow at residues 150–201 and 293–341; these read YDKS…VSLN and IYCR…YFKS.

This Arabidopsis thaliana (Mouse-ear cress) protein is Putative F-box/kelch-repeat protein At3g20710.